The primary structure comprises 95 residues: uncharacterized protein (95 aa).

This is an uncharacterized protein from Human adenovirus B serotype 7 (HAdV-7).